A 130-amino-acid polypeptide reads, in one-letter code: Small ribosomal subunit protein uS9 (130 aa).

Belongs to the universal ribosomal protein uS9 family.

This Buchnera aphidicola subsp. Acyrthosiphon pisum (strain Tuc7) protein is Small ribosomal subunit protein uS9.